Here is a 216-residue protein sequence, read N- to C-terminus: uncharacterized protein (216 aa).

Positions 56 and 77 each coordinate S-adenosyl-L-methionine.

The protein belongs to the methyltransferase superfamily. YrrT family.

In terms of biological role, could be a S-adenosyl-L-methionine-dependent methyltransferase. This is an uncharacterized protein from Alkaliphilus oremlandii (strain OhILAs) (Clostridium oremlandii (strain OhILAs)).